Reading from the N-terminus, the 325-residue chain is MACGEFSLIARYFDRVRSSRLDVELGIGDDCALLNIPEKQTLAISTDTLVAGNHFLPDIDPADLAYKALAVNLSDLAAMGADPAWLTLALTLPDVDEAWLESFSDSLFDLLNYYDMQLIGGDTTRGPLSMTLGIHGFVPMGRALTRSGAKPGDWIYVTGTPGDSAAGLAILQNRLQVADAKDADYLIKRHLRPSPRILQGQALRDLANSAIDLSDGLISDLGHIVKASDCGARIDLALLPFSDALSRHVVPEQALRWALSGGEDYELCFTVPELNRGALDVALGHLGVPFTCIGQMTADIEGLCFIRDGEPVTLDWKGYDHFATP.

Mg(2+) contacts are provided by Asp-30, Ser-45, Thr-46, and Asp-47. His-54 lines the substrate pocket. Residues Asp-75 and Asp-122 each contribute to the Mg(2+) site. ATP contacts are provided by residues 121–122 (GD) and Arg-146. Asp-212 provides a ligand contact to Mg(2+). An ATP-binding site is contributed by Ser-214. Position 215 (Asp-215) interacts with Mg(2+). Substrate contacts are provided by Glu-263 and Tyr-319.

The protein belongs to the thiamine-monophosphate kinase family.

The catalysed reaction is thiamine phosphate + ATP = thiamine diphosphate + ADP. The protein operates within cofactor biosynthesis; thiamine diphosphate biosynthesis; thiamine diphosphate from thiamine phosphate: step 1/1. In terms of biological role, catalyzes the ATP-dependent phosphorylation of thiamine-monophosphate (TMP) to form thiamine-pyrophosphate (TPP), the active form of vitamin B1. This chain is Thiamine-monophosphate kinase, found in Escherichia coli O157:H7.